Consider the following 284-residue polypeptide: Protein SIC1 (284 aa).

The disordered stretch occupies residues 1–89 (MTPSTPPRSR…SPFPKSSVKR (89 aa)). Threonine 5 is modified (phosphothreonine; by PHO85). 2 stretches are compositionally biased toward polar residues: residues 18-52 (PSGNTSSSALMQGQKTPQKPSQNLVPVTPSTTKSF) and 61-79 (PNSNMGMTSPFNGLTSPQR). Threonine 33 is subject to Phosphothreonine. Serine 76 is modified (phosphoserine). Threonine 173 is modified (phosphothreonine). Phosphoserine is present on residues serine 198 and serine 201. Residues lysine 268, lysine 272, and lysine 274 each carry the lysine derivative modification.

Interacts with HOG1. In terms of processing, phosphorylated by cyclin-dependent kinases CDC28 and PHO85 in association with G1-cyclins, promoting degradation of SIC1 and exit form G1. May contain a covalently attached chromophore. Post-translationally, the N-terminus is blocked.

It localises to the cytoplasm. The protein resides in the nucleus. Functionally, substrate and inhibitor of the cyclin-dependent protein kinase CDC28. Its activity could be important for faithful segregation of chromosomes to daughter cells. It acts in response to a signal from a post-start checkpoint. The protein is Protein SIC1 (SIC1) of Saccharomyces cerevisiae (strain ATCC 204508 / S288c) (Baker's yeast).